The sequence spans 98 residues: NADH-ubiquinone oxidoreductase chain 4L (98 aa).

A run of 3 helical transmembrane segments spans residues 1 to 21 (MSPI…GMLV), 26 to 46 (LMAS…TIAL), and 61 to 81 (ITLL…LVSI).

The protein belongs to the complex I subunit 4L family. In terms of assembly, core subunit of respiratory chain NADH dehydrogenase (Complex I) which is composed of 45 different subunits.

It is found in the mitochondrion inner membrane. It catalyses the reaction a ubiquinone + NADH + 5 H(+)(in) = a ubiquinol + NAD(+) + 4 H(+)(out). In terms of biological role, core subunit of the mitochondrial membrane respiratory chain NADH dehydrogenase (Complex I) which catalyzes electron transfer from NADH through the respiratory chain, using ubiquinone as an electron acceptor. Part of the enzyme membrane arm which is embedded in the lipid bilayer and involved in proton translocation. The protein is NADH-ubiquinone oxidoreductase chain 4L (MT-ND4L) of Chlorocebus aethiops (Green monkey).